We begin with the raw amino-acid sequence, 1476 residues long: ABC-type transporter FG02316 (1476 aa).

N2 is a glycosylation site (N-linked (GlcNAc...) asparagine). The next 10 membrane-spanning stretches (helical) occupy residues 23-43, 64-84, 97-117, 156-176, 266-286, 305-325, 384-404, 407-427, 485-505, and 532-552; these read FTLLFEESILVVPITALLLLA, WLYCKIILCLLLLASQIAFLV, SLPAAALSIVASITLLGLSYV, AAITALISTVVKILMLSAETI, ILFIIFPRLCFIGFTFCQPFL, QGYGLIGAWFLVFIGLAVTTG, VWANLIEIVIAVYLLGRQLGL, LIPVGAAIFSIVGSVIAVSFV, LLIWNMVLAYLAPIFAPVLSF, and LFALLQEPLASFVTSLSSFMG. The ABC transmembrane type-1 1 domain occupies 274–552; sequence LCFIGFTFCQ…FVTSLSSFMG (279 aa). Residues 586-615 form a disordered region; that stretch reads ISGVSSSEEKHPVSPIQESMMKTEPSGDSP. The 226-residue stretch at 622–847 folds into the ABC transporter 1 domain; the sequence is IRNASFGYDR…SDNYVSHSDV (226 aa). N-linked (GlcNAc...) asparagine glycosylation is present at N624. ATP is bound at residue 654–661; that stretch reads GPVGSGKS. Residues N682, N696, N798, and N836 are each glycosylated (N-linked (GlcNAc...) asparagine). The tract at residues 842–870 is disordered; sequence VSHSDVSSPDGARSKAPSSGPASSSAPVP. Over residues 855-870 the composition is skewed to low complexity; the sequence is SKAPSSGPASSSAPVP. A run of 6 helical transmembrane segments spans residues 906–926, 950–970, 1021–1041, 1045–1065, 1137–1157, and 1167–1187; these read MNAIGWIPTMVFVLAICAYIF, LGYYLGVYAMLGALSIIFLVL, LIDMDLPLSALNTFATFVLCI, ILIAVGSYYTAIAFPFLLATL, WLTLVLDMIVTIIAVLVVVLV, and GLIGVALVNIIQFSQHLKLLM. Positions 916 to 1195 constitute an ABC transmembrane type-1 2 domain; the sequence is VFVLAICAYI…LMTFWTTLET (280 aa). Residues 1232–1464 enclose the ABC transporter 2 domain; sequence ILFDQVSAGY…GPDASTFASM (233 aa). A glycan (N-linked (GlcNAc...) asparagine) is linked at N1250. An ATP-binding site is contributed by 1265–1272; the sequence is GRTGSGKS. The N-linked (GlcNAc...) asparagine glycan is linked to N1414.

It belongs to the ABC transporter superfamily. ABCC family. Conjugate transporter (TC 3.A.1.208) subfamily.

Its subcellular location is the cell membrane. Functionally, ABC-type transporter; part of the gene cluster that mediates the biosynthesis of the fusahexin, a cyclic hydrophobic hexapeptide with the amino acid sequence cyclo-(D-Ala-L-Leu-D-allo-Thr-L-Pro-D-Leu-L-Leu) that plays an important role in cell surface hydrophobicity. The polypeptide is ABC-type transporter FG02316 (Gibberella zeae (strain ATCC MYA-4620 / CBS 123657 / FGSC 9075 / NRRL 31084 / PH-1) (Wheat head blight fungus)).